The following is a 95-amino-acid chain: MTKVGGLGATHQADKTVEDIVNAVKPSIQSKLGTNISNLKVISYKTQLVNGTNYFVKVRTENGYAHLRIYKPFSGAASLVSVQDGKAKDDEITYF.

The short motif at 47–51 (QLVNG) is the Secondary area of contact element.

It belongs to the cystatin family.

Its subcellular location is the cytoplasm. Its function is as follows. Intracellular thiol proteinase inhibitor. Inhibits cathepsin B, but not papain. The polypeptide is Cystatin-A2 (cpiB) (Dictyostelium discoideum (Social amoeba)).